A 992-amino-acid chain; its full sequence is Meckelin (992 aa).

An N-terminal signal peptide occupies residues Met1–Ala36. Positions Gln37–Gly280 are cysteine-rich. Residues Gln37–Asp516 are Extracellular-facing. 12 disulfide bridges follow: Cys49–Cys62, Cys65–Cys78, Cys80–Cys97, Cys100–Cys114, Cys117–Cys127, Cys129–Cys150, Cys153–Cys170, Cys173–Cys184, Cys186–Cys197, Cys237–Cys246, Cys253–Cys268, and Cys354–Cys375. A glycan (N-linked (GlcNAc...) asparagine) is linked at Asn242. A helical membrane pass occupies residues Ala517–Arg545. Topologically, residues Arg546 to Gln555 are cytoplasmic. Residues Thr556–Phe587 traverse the membrane as a helical segment. The Extracellular portion of the chain corresponds to Lys588–Pro600. A helical membrane pass occupies residues Val601 to Gln628. Over Ile629–Thr667 the chain is Cytoplasmic. The segment at residues Tyr668 to Glu676 is an intramembrane region (helical). Residues Tyr668 to Val698 form a discontinuously helical membrane-spanning segment. An intramembrane segment occupies Ile677–Pro685. Positions Leu686 to Val698 form an intramembrane region, helical. Topologically, residues Val699 to Leu728 are extracellular. Residues Arg729 to Arg754 constitute an intramembrane region (helical). The chain crosses the membrane as a discontinuously helical span at residues Arg729–Ser768. An intramembrane segment occupies Phe755 to Lys759. An intramembrane region (helical) is located at residues Ile760–Ser768. The Cytoplasmic portion of the chain corresponds to Met769–Ser923. An intramembrane region (helical) is located at residues Phe924–Ser926. A discontinuously helical membrane pass occupies residues Phe924–Leu949. The stretch at Val927–Glu933 is an intramembrane region. Positions Ala934–Leu949 form an intramembrane region, helical. Residues Ala950–Phe954 lie on the Extracellular side of the membrane. Residues Val955 to Thr982 form a helical membrane-spanning segment. The Cytoplasmic segment spans residues Lys983 to Ile992.

Homodimer. Part of the tectonic-like complex (also named B9 complex). Interacts with DNAJB9, DNAJC10 and mutated SFTPC. Interacts with SYNE2 during the early establishment of cell polarity. Interacts (via C-terminus) with FLNA. Interacts with TMEM218. Interacts with WNT5A. Interacts with ROR2.

It is found in the cell membrane. It localises to the endoplasmic reticulum membrane. The protein localises to the cytoplasm. The protein resides in the cytoskeleton. Its subcellular location is the cilium basal body. In terms of biological role, part of the tectonic-like complex which is required for tissue-specific ciliogenesis and may regulate ciliary membrane composition. Involved in centrosome migration to the apical cell surface during early ciliogenesis. Required for ciliary structure and function, including a role in regulating length and appropriate number through modulating centrosome duplication. Is a key regulator of stereociliary bundle orientation. Required for epithelial cell branching morphology. Essential for endoplasmic reticulum-associated degradation (ERAD) of surfactant protein C (sftpc). Involved in the negative regulation of canonical Wnt signaling, and activation of the non-canonical cascade stimulated by WNT5A. In non-canonical Wnt signaling, it may act as ROR2 coreceptor. This chain is Meckelin (Tmem67), found in Mus musculus (Mouse).